Reading from the N-terminus, the 1451-residue chain is Dual 3',5'-cyclic-AMP and -GMP phosphodiesterase 11 (1451 aa).

5 disordered regions span residues 1 to 54 (MGQA…PQIQ), 75 to 100 (ATTPLQFQPTGRMNTEQGGTGYGGYG), 125 to 169 (LPAH…QVQQ), 235 to 262 (GNDVVSSTSPTHANGQTSSSRGGSGATT), and 327 to 374 (QHHH…GSGG). The span at 11–21 (RGCRYKNKNKS) shows a compositional bias: basic residues. Residues 24–45 (QQQQQQQQQQQQQQQHQQQQQQ) are compositionally biased toward low complexity. The span at 77–91 (TPLQFQPTGRMNTEQ) shows a compositional bias: polar residues. Low complexity-rich tracts occupy residues 135 to 147 (SGAAPPSSSNGSS) and 160 to 169 (QQQQQYQVQQ). Residues 235–248 (GNDVVSSTSPTHAN) show a composition bias toward polar residues. Residues 327–340 (QHHHNHAHLHHSQH) show a composition bias toward basic residues. A compositionally biased stretch (low complexity) spans 341-355 (SHYQAGGAVGSSSLG). The segment covering 356–374 (STGGASGAGGAPSLGGSGG) has biased composition (gly residues). 2 GAF domains span residues 419–572 (EVRT…GIGL) and 604–754 (TIEH…GMGI). The region spanning 783–1107 (ATMDEAHRLR…GHWIDLADVV (325 aa)) is the PDEase domain. Residue His860 is the Proton donor of the active site. Residues His864, His900, Asp901, and Asp1011 each coordinate a divalent metal cation. Disordered regions lie at residues 1109-1171 (TKTS…SNTN), 1200-1248 (DEQA…TPVS), 1268-1305 (QTSNQAQTQKQRCKSCDHSRSGLQVRKTSSLRGAQELD), and 1325-1364 (INNHSHHHNHSHSHNHNHHHHHHHHSHHNHSQHGIGIGSA). Composition is skewed to low complexity over residues 1142 to 1171 (ASEAEVAVDSPSEKASVNGSNVANNSSNTN) and 1218 to 1234 (CRSNSTCSSSTASSCLS). Residues 1268 to 1277 (QTSNQAQTQK) are compositionally biased toward polar residues. The segment covering 1328–1355 (HSHHHNHSHSHNHNHHHHHHHHSHHNHS) has biased composition (basic residues).

It belongs to the cyclic nucleotide phosphodiesterase family. The cofactor is a divalent metal cation. In adults, it is enriched in Malpighian tubules.

It catalyses the reaction 3',5'-cyclic GMP + H2O = GMP + H(+). The catalysed reaction is 3',5'-cyclic AMP + H2O = AMP + H(+). Its function is as follows. Plays a role in signal transduction by regulating the intracellular concentration of cyclic nucleotides cAMP and cGMP. Dual-specificity phosphodiesterase that catalyzes the hydrolysis of both cAMP and cGMP to 5'-AMP and 5'-GMP, respectively. The sequence is that of Dual 3',5'-cyclic-AMP and -GMP phosphodiesterase 11 (Pde11) from Drosophila melanogaster (Fruit fly).